Reading from the N-terminus, the 295-residue chain is Nucleotide-binding protein LSL_1171 (295 aa).

Residue 13–20 (GMSGAGKT) participates in ATP binding. 63 to 66 (DLRS) is a GTP binding site.

The protein belongs to the RapZ-like family.

Displays ATPase and GTPase activities. In Ligilactobacillus salivarius (strain UCC118) (Lactobacillus salivarius), this protein is Nucleotide-binding protein LSL_1171.